Here is a 229-residue protein sequence, read N- to C-terminus: Large ribosomal subunit protein uL1 (229 aa).

This sequence belongs to the universal ribosomal protein uL1 family. In terms of assembly, part of the 50S ribosomal subunit.

Binds directly to 23S rRNA. The L1 stalk is quite mobile in the ribosome, and is involved in E site tRNA release. Its function is as follows. Protein L1 is also a translational repressor protein, it controls the translation of the L11 operon by binding to its mRNA. The chain is Large ribosomal subunit protein uL1 from Thermus thermophilus (strain ATCC BAA-163 / DSM 7039 / HB27).